The sequence spans 215 residues: UPF0502 protein PputGB1_3531 (215 aa).

Belongs to the UPF0502 family.

The polypeptide is UPF0502 protein PputGB1_3531 (Pseudomonas putida (strain GB-1)).